The sequence spans 54 residues: MLHYAVVFFVIALIAALFGFGGIAASAVSIGKILFIVFAILAVASFLFGLIKKR.

2 helical membrane passes run 5–25 (AVVF…GIAA) and 30–50 (IGKI…LFGL).

It belongs to the UPF0391 family.

Its subcellular location is the cell membrane. In Albidiferax ferrireducens (strain ATCC BAA-621 / DSM 15236 / T118) (Rhodoferax ferrireducens), this protein is UPF0391 membrane protein Rfer_1875.